The following is a 107-amino-acid chain: UPF0060 membrane protein Atu1058 (107 aa).

A run of 4 helical transmembrane segments spans residues 5–25, 32–52, 59–79, and 85–105; these read LIYVLAAVAEIAGCFSFWAWL, WILLPGMVALAAFAWLLTLVA, AYAAYGGIYIAASLFWLWGVE, and RWDIAGGVVCLAGTAIILFGP.

This sequence belongs to the UPF0060 family.

It is found in the cell inner membrane. The chain is UPF0060 membrane protein Atu1058 from Agrobacterium fabrum (strain C58 / ATCC 33970) (Agrobacterium tumefaciens (strain C58)).